The primary structure comprises 332 residues: Leucine carboxyl methyltransferase 1 (332 aa).

S-adenosyl-L-methionine contacts are provided by residues Arg-71, Gly-96, Asp-120, 169–170, and Glu-196; that span reads DL.

This sequence belongs to the methyltransferase superfamily. LCMT family.

It carries out the reaction [phosphatase 2A protein]-C-terminal L-leucine + S-adenosyl-L-methionine = [phosphatase 2A protein]-C-terminal L-leucine methyl ester + S-adenosyl-L-homocysteine. Its function is as follows. Methylates the carboxyl group of the C-terminal leucine residue of protein phosphatase 2A catalytic subunits to form alpha-leucine ester residues. The polypeptide is Leucine carboxyl methyltransferase 1 (Lcmt1) (Rattus norvegicus (Rat)).